Consider the following 132-residue polypeptide: Group 2 truncated hemoglobin YjbI (132 aa).

4 residues coordinate heme: threonine 45, lysine 48, tyrosine 63, and histidine 76.

This sequence belongs to the truncated hemoglobin family. Group II subfamily. In terms of assembly, monomer. It depends on heme as a cofactor.

In terms of biological role, hemoglobin-like protein that exhibits a low peroxidase activity. Its very high oxygen affinity may rule out the possibility that it is involved in oxygen transport. In Bacillus subtilis (strain 168), this protein is Group 2 truncated hemoglobin YjbI (yjbI).